A 202-amino-acid polypeptide reads, in one-letter code: Hypoxanthine-guanine phosphoribosyltransferase (202 aa).

K66 and G67 together coordinate diphosphate. Mg(2+)-binding residues include E122 and D123. Catalysis depends on D126, which acts as the Proton acceptor. Residues K154, 175-176, and D182 contribute to the GMP site; that span reads FV. A diphosphate-binding site is contributed by R188.

Belongs to the purine/pyrimidine phosphoribosyltransferase family. Homodimer and homotetramer in equilibrium. The presence or absence of divalent metal ions, as well as phosphate, can affect the oligomerization state of the enzyme. Likely functions as a tetramer (rather than a dimer) in its biological environment, which is the most active form. The dimeric structure is also active though ~50% of that of the tetramer. The cofactor is Mg(2+).

Its subcellular location is the cytoplasm. It catalyses the reaction IMP + diphosphate = hypoxanthine + 5-phospho-alpha-D-ribose 1-diphosphate. The catalysed reaction is GMP + diphosphate = guanine + 5-phospho-alpha-D-ribose 1-diphosphate. The protein operates within purine metabolism; IMP biosynthesis via salvage pathway; IMP from hypoxanthine: step 1/1. It participates in purine metabolism; GMP biosynthesis via salvage pathway; GMP from guanine: step 1/1. With respect to regulation, competitively inhibited by acyclic nucleoside phosphonates (ANPs) with Ki values as low as 0.69 uM. Prodrugs of these compounds arrest the growth of a virulent strain of M.tuberculosis with MIC50 values as low as 4.5 uM and possess low cytotoxicity in mammalian cells. Inhibited by pyrrolidine nucleoside bisphosphonates, which are also able to arrest the growth of virulent M.tuberculosis not only in its replicating phase but also in its latent phase, and to arrest the growth of M.tuberculosis in infected macrophages while having low cytotoxicity in mammalian cells. Functionally, purine salvage pathway enzyme that catalyzes the transfer of the ribosyl-5-phosphate group from 5-phospho-alpha-D-ribose 1-diphosphate (PRPP) to the N9 position of the 6-oxopurines hypoxanthine and guanine to form the corresponding ribonucleotides IMP (inosine 5'-monophosphate) and GMP (guanosine 5'-monophosphate), with the release of PPi. Thus, specifically recycles hypoxanthine and guanine imported from the external medium, and converts them to IMP and GMP, respectively. Cannot use xanthine as substrate. The polypeptide is Hypoxanthine-guanine phosphoribosyltransferase (Mycobacterium tuberculosis (strain ATCC 25618 / H37Rv)).